We begin with the raw amino-acid sequence, 294 residues long: Acetyl-coenzyme A carboxylase carboxyl transferase subunit beta (294 aa).

Positions 25 to 294 constitute a CoA carboxyltransferase N-terminal domain; sequence VWTKCTSCEQ…PLVVPVDGSH (270 aa). Residues Cys-29, Cys-32, Cys-48, and Cys-51 each coordinate Zn(2+). The C4-type zinc-finger motif lies at 29–51; it reads CTSCEQVLYSAELERNLEVCPKC.

Belongs to the AccD/PCCB family. Acetyl-CoA carboxylase is a heterohexamer composed of biotin carboxyl carrier protein (AccB), biotin carboxylase (AccC) and two subunits each of ACCase subunit alpha (AccA) and ACCase subunit beta (AccD). It depends on Zn(2+) as a cofactor.

It is found in the cytoplasm. It catalyses the reaction N(6)-carboxybiotinyl-L-lysyl-[protein] + acetyl-CoA = N(6)-biotinyl-L-lysyl-[protein] + malonyl-CoA. It participates in lipid metabolism; malonyl-CoA biosynthesis; malonyl-CoA from acetyl-CoA: step 1/1. Its function is as follows. Component of the acetyl coenzyme A carboxylase (ACC) complex. Biotin carboxylase (BC) catalyzes the carboxylation of biotin on its carrier protein (BCCP) and then the CO(2) group is transferred by the transcarboxylase to acetyl-CoA to form malonyl-CoA. In Aliivibrio fischeri (strain MJ11) (Vibrio fischeri), this protein is Acetyl-coenzyme A carboxylase carboxyl transferase subunit beta.